Reading from the N-terminus, the 596-residue chain is Phosphoenolpyruvate carboxykinase [GTP] (596 aa).

Substrate-binding positions include Arg-77 and 205-207 (YGG). Mn(2+) is bound by residues Lys-214 and His-234. Residue Ser-256 participates in substrate binding. 257 to 262 (ACGKTN) contacts GTP. The active site involves Cys-258. Asp-283 serves as a coordination point for Mn(2+). Residues 362 to 388 (KKGSTEKAAHPNSRFTAPAKNNPAISP) form a disordered region. 373–375 (NSR) is a substrate binding site. GTP-binding positions include Arg-375, Arg-406, and 499–502 (YGDN).

This sequence belongs to the phosphoenolpyruvate carboxykinase [GTP] family. In terms of assembly, monomer. Mn(2+) serves as cofactor.

Its subcellular location is the cytoplasm. The enzyme catalyses oxaloacetate + GTP = phosphoenolpyruvate + GDP + CO2. It participates in carbohydrate biosynthesis; gluconeogenesis. Functionally, catalyzes the conversion of oxaloacetate (OAA) to phosphoenolpyruvate (PEP), the rate-limiting step in the metabolic pathway that produces glucose from lactate and other precursors derived from the citric acid cycle. The protein is Phosphoenolpyruvate carboxykinase [GTP] of Anaeromyxobacter dehalogenans (strain 2CP-1 / ATCC BAA-258).